Reading from the N-terminus, the 334-residue chain is Holliday junction branch migration complex subunit RuvB (334 aa).

Residues 1–181 (MTRILDNDLM…FGITGHMEYY (181 aa)) are large ATPase domain (RuvB-L). ATP-binding positions include Leu20, Arg21, Gly62, Lys65, Thr66, Thr67, 128–130 (EDF), Arg171, Tyr181, and Arg218. Residue Thr66 participates in Mg(2+) binding. The small ATPAse domain (RuvB-S) stretch occupies residues 182–252 (QVDDLTEIVE…MTDKALEMLD (71 aa)). The segment at 255-334 (HEGLDYVDQK…LKYPLDTKTE (80 aa)) is head domain (RuvB-H). 4 residues coordinate DNA: Arg291, Arg310, Arg312, and Arg315.

Belongs to the RuvB family. As to quaternary structure, homohexamer. Forms an RuvA(8)-RuvB(12)-Holliday junction (HJ) complex. HJ DNA is sandwiched between 2 RuvA tetramers; dsDNA enters through RuvA and exits via RuvB. An RuvB hexamer assembles on each DNA strand where it exits the tetramer. Each RuvB hexamer is contacted by two RuvA subunits (via domain III) on 2 adjacent RuvB subunits; this complex drives branch migration. In the full resolvosome a probable DNA-RuvA(4)-RuvB(12)-RuvC(2) complex forms which resolves the HJ.

It localises to the cytoplasm. The enzyme catalyses ATP + H2O = ADP + phosphate + H(+). In terms of biological role, the RuvA-RuvB-RuvC complex processes Holliday junction (HJ) DNA during genetic recombination and DNA repair, while the RuvA-RuvB complex plays an important role in the rescue of blocked DNA replication forks via replication fork reversal (RFR). RuvA specifically binds to HJ cruciform DNA, conferring on it an open structure. The RuvB hexamer acts as an ATP-dependent pump, pulling dsDNA into and through the RuvAB complex. RuvB forms 2 homohexamers on either side of HJ DNA bound by 1 or 2 RuvA tetramers; 4 subunits per hexamer contact DNA at a time. Coordinated motions by a converter formed by DNA-disengaged RuvB subunits stimulates ATP hydrolysis and nucleotide exchange. Immobilization of the converter enables RuvB to convert the ATP-contained energy into a lever motion, pulling 2 nucleotides of DNA out of the RuvA tetramer per ATP hydrolyzed, thus driving DNA branch migration. The RuvB motors rotate together with the DNA substrate, which together with the progressing nucleotide cycle form the mechanistic basis for DNA recombination by continuous HJ branch migration. Branch migration allows RuvC to scan DNA until it finds its consensus sequence, where it cleaves and resolves cruciform DNA. This is Holliday junction branch migration complex subunit RuvB from Streptococcus uberis (strain ATCC BAA-854 / 0140J).